We begin with the raw amino-acid sequence, 322 residues long: Solute carrier family 35 member B1 (322 aa).

Helical transmembrane passes span 12 to 32, 51 to 71, 85 to 105, 136 to 156, 168 to 188, 210 to 230, 243 to 263, and 285 to 305; these read LRLPLCFLGVFVCYFYYGILQ, FALTLVFIQCVINAMFAKILI, WLYAACSVSYVGAMVSSNSAL, YPLAKYLCVLLIVAGVALFMY, TVGFGELLLLLSLTLDGLTGV, LWSTVLLGAGILFTGELWEFL, ILLFGLTSALGQSFIFMTVVY, and VILFANPISSMQWVGTVLVFL. Residues 318 to 322 carry the Di-lysine motif motif; sequence KKTSH.

This sequence belongs to the nucleotide-sugar transporter family. SLC35B subfamily.

Its subcellular location is the endoplasmic reticulum membrane. The enzyme catalyses ADP(in) + ATP(out) = ADP(out) + ATP(in). The catalysed reaction is UDP(out) + ATP(in) = UDP(in) + ATP(out). It carries out the reaction UTP(out) + ATP(in) = UTP(in) + ATP(out). It catalyses the reaction dATP(out) + ATP(in) = dATP(in) + ATP(out). ATP:ADP antiporter that catalyzes the exchange of ATP and ADP across the endoplasmic reticulum (ER) membrane. Imports ATP from the cytosol to the ER lumen and exports ADP in the opposite direction. Regulates ER energy metabolism and protein biogenesis. Appears to be part of a calcium-dependent ER to cytosol low energy response axis, where calcium efflux from ER to the cytosol triggers ATP import into the ER lumen to maintain sufficient ATP supply. Provides ATP to ER chaperone HSPA5 that drives protein folding and trafficking in the ER. Can transport dATP, UTP or UDP in exchange for ATP, but the physiological relevance of this process remains to be established. The chain is Solute carrier family 35 member B1 (Slc35b1) from Rattus norvegicus (Rat).